Here is a 524-residue protein sequence, read N- to C-terminus: 5'-AMP-activated protein kinase subunit gamma-2 (524 aa).

Residues 1–178 (MPLLDGDLEG…TRPPLASPTH (178 aa)) are disordered. Residues S21, S27, S29, S46, S94, S99, S117, and S118 each carry the phosphoserine modification. Residues 112–123 (TSGLSSSPSTPT) show a composition bias toward low complexity. T121 carries the post-translational modification Phosphothreonine. Residues 135–145 (SYKHEPERLEN) show a composition bias toward basic and acidic residues. The segment covering 148-168 (YASSSPPDTGQRFCPSSFQSP) has biased composition (polar residues). S152 is modified (phosphoserine). CBS domains are found at residues 230-290 (PTSS…KSPM), 312-370 (TFKP…MSDM), and 385-447 (IGTY…NLDI). Residues R257, 272–277 (MLTITD), V317, 338–339 (HR), and K357 each bind ADP. Residues R257, 272 to 277 (MLTITD), V317, H338, 338 to 339 (HR), K357, T387, A392, 413 to 414 (SA), 429 to 432 (SKFD), R456, H485, 485 to 486 (HR), and 501 to 504 (SLSD) each bind AMP. Residues R257, 272–277 (MLTITD), V317, 338–339 (HR), R339, and K357 contribute to the ATP site. The short motif at 325–346 (LLDAVYSLIKNKIHRLPVIDPI) is the AMPK pseudosubstrate element. Residues 429 to 432 (SKFD), R456, and 485 to 486 (HR) contribute to the ADP site. Residues 429 to 432 (SKFD), R456, and 485 to 486 (HR) contribute to the ATP site. The region spanning 459–517 (YFEGVVKCNKLEILETIVDRIVRAEVHRLVVANEADSIVGIISLSDILQALILTPAGAK) is the CBS 4 domain.

It belongs to the 5'-AMP-activated protein kinase gamma subunit family. In terms of assembly, AMPK is a heterotrimer of an alpha catalytic subunit (PRKAA1 or PRKAA2), a beta (PRKAB1 or PRKAB2) and a gamma non-catalytic subunits (PRKAG1, PRKAG2 or PRKAG3). Interacts with FNIP1 and FNIP2. Phosphorylated by ULK1; leading to negatively regulate AMPK activity and suggesting the existence of a regulatory feedback loop between ULK1 and AMPK. In terms of processing, glycosylated; O-GlcNAcylated by OGT, promoting the AMP-activated protein kinase (AMPK) activity.

Functionally, AMP/ATP-binding subunit of AMP-activated protein kinase (AMPK), an energy sensor protein kinase that plays a key role in regulating cellular energy metabolism. In response to reduction of intracellular ATP levels, AMPK activates energy-producing pathways and inhibits energy-consuming processes: inhibits protein, carbohydrate and lipid biosynthesis, as well as cell growth and proliferation. AMPK acts via direct phosphorylation of metabolic enzymes, and by longer-term effects via phosphorylation of transcription regulators. Also acts as a regulator of cellular polarity by remodeling the actin cytoskeleton; probably by indirectly activating myosin. Gamma non-catalytic subunit mediates binding to AMP, ADP and ATP, leading to activate or inhibit AMPK: AMP-binding results in allosteric activation of alpha catalytic subunit (PRKAA1 or PRKAA2) both by inducing phosphorylation and preventing dephosphorylation of catalytic subunits. ADP also stimulates phosphorylation, without stimulating already phosphorylated catalytic subunit. ATP promotes dephosphorylation of catalytic subunit, rendering the AMPK enzyme inactive. The chain is 5'-AMP-activated protein kinase subunit gamma-2 (PRKAG2) from Pongo abelii (Sumatran orangutan).